Reading from the N-terminus, the 406-residue chain is Probable endo-xylogalacturonan hydrolase A (406 aa).

Positions 1–18 (MLYPRNLALFSLLSLSSA) are cleaved as a signal peptide. PbH1 repeat units lie at residues 183 to 213 (TQHV…DIGA), 214 to 235 (STHV…AFKP), 237 to 257 (SNYV…SVGS), and 299 to 320 (VKNV…QIES). Residue D228 is the Proton donor of the active site. Residue H251 is part of the active site. A glycan (N-linked (GlcNAc...) asparagine) is linked at N301.

This sequence belongs to the glycosyl hydrolase 28 family.

It is found in the secreted. Pectinolytic enzyme involved in the degradation of xylogalacturonan (xga), a galacturonan backbone heavily substituted with xylose, and which is one important component of the hairy regions of pectin. Activity requires a galacturonic acid backbone substituted with xylose. The sequence is that of Probable endo-xylogalacturonan hydrolase A (xghA) from Aspergillus fumigatus (strain CBS 144.89 / FGSC A1163 / CEA10) (Neosartorya fumigata).